The chain runs to 336 residues: Telomere-binding protein cav (336 aa).

Positions 107 to 328 (RKKMVQPYPE…TITFQNSESE (222 aa)) are required for binding to Su(var)205. 2 disordered regions span residues 137-158 (RLDR…SPAR) and 199-218 (SSDL…SEFQ). 2 short sequence motifs (su(var)205-binding Pro-containing repeat) span residues 225-231 (PETAINE) and 289-295 (PETEMNE). Residues 308-327 (MSIGPSIDSEGTITFQNSES) are compositionally biased toward polar residues. Positions 308–336 (MSIGPSIDSEGTITFQNSESEPIDVDSIA) are disordered.

In terms of assembly, interacts (via C-terminus) with Su(var)205 dimer (via hinge and chromoshadow domain) and with moi to form the terminin, telomere-capping, complex. Interacts with HP6, which is also part of the terminin complex.

It is found in the nucleus. The protein localises to the chromosome. Its subcellular location is the telomere. Binds to chromosome ends in a sequence-dependent manner and is required for telomere capping. The polypeptide is Telomere-binding protein cav (Drosophila sechellia (Fruit fly)).